The sequence spans 96 residues: Cysteine proteinase (96 aa).

Residues Cys-25 and Cys-79 are joined by a disulfide bond. Active-site residues include His-31 and Asn-58.

It belongs to the peptidase C1 family.

In Carica papaya (Papaya), this protein is Cysteine proteinase.